The chain runs to 2123 residues: Toxin Afp18 (2123 aa).

The tract at residues 864–919 (FFDNSDQDADQPRVRRKREMTDEIMLSDGSSRSEAKALPDENELDTDQSKSRPESA) is disordered. A tyrosine glycosyltransferase region spans residues 1771–2123 (VFDSANTNRS…GNSTQSSGLS (353 aa)). UDP-N-acetyl-alpha-D-glucosamine is bound by residues 1850–1852 (IWV) and 1940–1941 (SD). Positions 1957 and 1959 each coordinate a divalent metal cation. The DxDD motif signature appears at 1957–1960 (DIDD). Asn1993 serves as a coordination point for UDP-N-acetyl-alpha-D-glucosamine.

A divalent metal cation serves as cofactor.

It is found in the secreted. It localises to the host cell membrane. The catalysed reaction is L-tyrosyl-[protein] + UDP-N-acetyl-alpha-D-glucosamine = O-(N-acetyl-alpha-D-glucosaminyl)-L-tyrosyl-[protein] + UDP + H(+). In terms of biological role, toxin component of the prophage tail-derived protein translocation system Afp, which is the causative agent of enteric redmouth disease in salmonid fish species. Mono-O-GlcNAcylates the small GTPase RhoA in eukaryotic host cells at Tyr-34, using UDP-N-acetylglucosamine (UDP-GlcNAc) as the sugar donor. Glycosylation of RhoA results in impaired effector and regulator interaction and inactivation of downstream RhoA signaling which leads to actin filament depolymerization and blocks cytokinesis and gastrulation during zebrafish embryo development. To a lesser extent, is also able to glycosylate other Rho family GTPases (RhoB, RhoC, Rac1, Rac2, Rac3, and Cdc42) in vitro at a switch I tyrosine residue, but not Ras proteins. The polypeptide is Toxin Afp18 (Yersinia ruckeri serotype O1 (strain ATCC 29473 / DSM 18506 / JCM 15110 / CCUG 14190 / NCIMB 2194 / NCTC 12986 / 2396-61)).